Reading from the N-terminus, the 161-residue chain is Efficient mitochondria targeting-associated protein 19 (161 aa).

The Cytoplasmic segment spans residues 1 to 10 (MKLGHREQQF). The EXPERA domain occupies 7-159 (EQQFYLWYFI…PTFLIPLRLC (153 aa)). A helical membrane pass occupies residues 11–31 (YLWYFIVHIPITIFIDSSVVI). The Lumenal portion of the chain corresponds to 32–61 (PAKWQLGIAQKVVSDHIAKQHDFLLSEKPE). A helical membrane pass occupies residues 62-82 (WLYWFVVLELVLQLPLFVYFV). Residues 83-101 (NKFWNSSELQVNTNSRLKK) lie on the Cytoplasmic side of the membrane. The helical transmembrane segment at 102-122 (WLRIYGWNASLTTLICIVVIF) threads the bilayer. The Lumenal segment spans residues 123–141 (KRGYIPYDVLKTSLSMTQK). Residues 142 to 160 (CQLASVYLPTFLIPLRLCF) form a helical membrane-spanning segment. Val161 is a topological domain (cytoplasmic).

It belongs to the TMEM97/sigma-2 receptor family.

It localises to the endoplasmic reticulum membrane. Part of an import route for newly synthesized mitochondrial proteins termed the ER-SURF pathway (ER surface-mediated protein targeting), which retrieves mitochondrial precursor proteins from the ER surface and reroutes them to mitochondria for efficient mitochondrial import. Acts as a quality control factor in the ER, promoting the proteolytic degradation of nonproductive and extramitochondrial precursor proteins in the ER membrane thus removing them from the ER surface. This is Efficient mitochondria targeting-associated protein 19 from Saccharomyces cerevisiae (strain ATCC 204508 / S288c) (Baker's yeast).